An 806-amino-acid chain; its full sequence is Mitogen-activated protein kinase 7 (806 aa).

The interval 1 to 23 (MAEPLKEEDGEDGSGEPPGRVKA) is disordered. Ala-2 bears the N-acetylalanine mark. Residues 2–77 (AEPLKEEDGE…VVSSARRRLT (76 aa)) are required for cytoplasmic targeting. Residues 55 to 347 (YEIIETIGNG…AAAALRHPFL (293 aa)) form the Protein kinase domain. ATP-binding positions include 61–69 (IGNGAYGVV) and Lys-84. A required for binding to MAP2K5 region spans residues 78–139 (GQQVAIKKIP…FRSVYVVLDL (62 aa)). The segment at 140–406 (MESDLHQIIH…QQIRFQPSLQ (267 aa)) is necessary for oligomerization. Asp-182 acts as the Proton acceptor in catalysis. Positions 219–221 (TEY) match the TXY motif. A may not be required for kinase activity; required to stimulate MEF2C activity region spans residues 407–806 (PVASEPVCPD…LSDLPDLQEP (400 aa)). Disordered stretches follow at residues 424–473 (APSG…AISD) and 488–727 (RSRL…PKGS). Residues 433-443 (SPPPALPPCSD) are compositionally biased toward pro residues. Basic and acidic residues-rich tracts occupy residues 502-519 (PEPRKPVTAQERQREREE), 527-544 (RAKEREKRRQERERKERG), and 563-573 (DNDRSLLERWT). The Nuclear localization signal signature appears at 505-539 (RKPVTAQERQREREEKRRRRQERAKEREKRRQERE). The segment covering 578–592 (PPAPAPAPAPAPAPA) has biased composition (pro residues). The span at 593–603 (PSSAQPTSTPT) shows a compositional bias: low complexity. The segment covering 627–643 (VCPPPGPVPQPAGPIPA) has biased composition (pro residues). Polar residues predominate over residues 647–660 (TAPSTSLLASQSLV). Residues 678-689 (PSGPPPPDPGLT) are compositionally biased toward pro residues. Positions 693–710 (STSESPDVNLVTQQLSKS) are enriched in polar residues. A Phosphoserine modification is found at Ser-710. At Thr-723 the chain carries Phosphothreonine.

It belongs to the protein kinase superfamily. CMGC Ser/Thr protein kinase family. MAP kinase subfamily. As to quaternary structure, interacts with MAP2K5. Forms oligomers. Interacts with MEF2A, MEF2C and MEF2D; the interaction phosphorylates the MEF2s and enhances transcriptional activity of MEF2A, MEF2C but not MEF2D. Interacts with SGK1. Interacts with PML. Interacts (via N-terminal half) with HSP90AB1-CDC37 chaperone complex in resting cells; the interaction is MAP2K5-independent and prevents MAPK7 from ubiquitination and proteasomal degradation. Interacts with STUB1/CHIP; the interaction is enhanced in the presence of IGF1 or MAP2K5 and promotes STUB1/CHIP E3 ligase activity. Mg(2+) is required as a cofactor. Post-translationally, dually phosphorylated on Thr-219 and Tyr-221, which activates the enzyme. Detected in testis, brain, kidney, lung and heart. Detected in total embryo (at protein level).

The protein resides in the cytoplasm. Its subcellular location is the nucleus. It localises to the PML body. The enzyme catalyses L-seryl-[protein] + ATP = O-phospho-L-seryl-[protein] + ADP + H(+). It carries out the reaction L-threonyl-[protein] + ATP = O-phospho-L-threonyl-[protein] + ADP + H(+). Activated by tyrosine and threonine phosphorylation. Activated in response to hyperosmolarity, hydrogen peroxide, and epidermal growth factor (EGF). Its function is as follows. Plays a role in various cellular processes such as proliferation, differentiation and cell survival. The upstream activator of MAPK7 is the MAPK kinase MAP2K5. Upon activation, it translocates to the nucleus and phosphorylates various downstream targets including MEF2C. EGF activates MAPK7 through a Ras-independent and MAP2K5-dependent pathway. As part of the MAPK/ERK signaling pathway, acts as a negative regulator of apoptosis in cardiomyocytes via interaction with STUB1/CHIP and promotion of STUB1-mediated ubiquitination and degradation of ICER-type isoforms of CREM. May have a role in muscle cell differentiation. May be important for endothelial function and maintenance of blood vessel integrity. MAP2K5 and MAPK7 interact specifically with one another and not with MEK1/ERK1 or MEK2/ERK2 pathways. Phosphorylates SGK1 at Ser-78 and this is required for growth factor-induced cell cycle progression. Involved in the regulation of p53/TP53 by disrupting the PML-MDM2 interaction. This chain is Mitogen-activated protein kinase 7 (Mapk7), found in Mus musculus (Mouse).